We begin with the raw amino-acid sequence, 141 residues long: Lysozyme 1 (141 aa).

A signal peptide spans 1–19 (MKFFIVLVAALALAAPAMG). In terms of domain architecture, C-type lysozyme spans 20–141 (KTFTRCSLAR…GSLPSINDCF (122 aa)). Disulfide bonds link Cys25-Cys140, Cys46-Cys130, Cys81-Cys97, and Cys93-Cys111. Glu51 is a catalytic residue. N-linked (GlcNAc...) asparagine glycosylation occurs at Asn65. The active site involves Asp69. Residue Asn104 is glycosylated (N-linked (GlcNAc...) asparagine).

It belongs to the glycosyl hydrolase 22 family.

The enzyme catalyses Hydrolysis of (1-&gt;4)-beta-linkages between N-acetylmuramic acid and N-acetyl-D-glucosamine residues in a peptidoglycan and between N-acetyl-D-glucosamine residues in chitodextrins.. Functionally, may not function as a self-defense protein, but as a digestive enzyme, probably in the gut of the insect body. Inactive towards Micrococcus luteus. Active toward glycol chitin. The chain is Lysozyme 1 from Musca domestica (House fly).